The primary structure comprises 103 residues: NADH-quinone oxidoreductase subunit K 2 (103 aa).

Transmembrane regions (helical) follow at residues 7 to 27, 31 to 51, and 63 to 83; these read LAWYLMLSAFLFICGVIGFMI, IITIFMCIELMLNAVNLTFVA, and IFVFFVMVVAAAESAVGLGII.

The protein belongs to the complex I subunit 4L family. NDH-1 is composed of 14 different subunits. Subunits NuoA, H, J, K, L, M, N constitute the membrane sector of the complex.

The protein localises to the cell inner membrane. It carries out the reaction a quinone + NADH + 5 H(+)(in) = a quinol + NAD(+) + 4 H(+)(out). Functionally, NDH-1 shuttles electrons from NADH, via FMN and iron-sulfur (Fe-S) centers, to quinones in the respiratory chain. The immediate electron acceptor for the enzyme in this species is believed to be ubiquinone. Couples the redox reaction to proton translocation (for every two electrons transferred, four hydrogen ions are translocated across the cytoplasmic membrane), and thus conserves the redox energy in a proton gradient. In Koribacter versatilis (strain Ellin345), this protein is NADH-quinone oxidoreductase subunit K 2.